The following is a 182-amino-acid chain: Nucleoside-triphosphatase THEP1 (182 aa).

ATP contacts are provided by residues 10-17 (GRPGIGKT) and 102-109 (VVVIDEIG).

The protein belongs to the THEP1 NTPase family.

The enzyme catalyses a ribonucleoside 5'-triphosphate + H2O = a ribonucleoside 5'-diphosphate + phosphate + H(+). Functionally, has nucleotide phosphatase activity towards ATP, GTP, CTP, TTP and UTP. May hydrolyze nucleoside diphosphates with lower efficiency. This Thermofilum pendens (strain DSM 2475 / Hrk 5) protein is Nucleoside-triphosphatase THEP1.